A 724-amino-acid polypeptide reads, in one-letter code: Catalase-peroxidase (724 aa).

Residues W98 to Y226 constitute a cross-link (tryptophyl-tyrosyl-methioninium (Trp-Tyr) (with M-252)). The active-site Proton acceptor is the H99. The tryptophyl-tyrosyl-methioninium (Tyr-Met) (with W-98) cross-link spans Y226–M252. A heme b-binding site is contributed by H267.

It belongs to the peroxidase family. Peroxidase/catalase subfamily. As to quaternary structure, homodimer or homotetramer. Heme b serves as cofactor. In terms of processing, formation of the three residue Trp-Tyr-Met cross-link is important for the catalase, but not the peroxidase activity of the enzyme.

The catalysed reaction is H2O2 + AH2 = A + 2 H2O. It carries out the reaction 2 H2O2 = O2 + 2 H2O. Functionally, bifunctional enzyme with both catalase and broad-spectrum peroxidase activity. This Edwardsiella tarda protein is Catalase-peroxidase.